The following is a 132-amino-acid chain: MIKKRKKNPYEASASGFYISMSAHKARRIIDQIRGRSYEETLMILELMPYRACYPIFKLVYSAAANASHNMGLNEASLVISKAEVNEGATMKKFKPRARGRSYLIKRPTCHISIVLEDISYEEYEEDFLRRI.

The protein belongs to the universal ribosomal protein uL22 family. In terms of assembly, part of the 50S ribosomal subunit.

Its subcellular location is the plastid. The protein localises to the chloroplast. Functionally, this protein binds specifically to 23S rRNA. In terms of biological role, the globular domain of the protein is located near the polypeptide exit tunnel on the outside of the subunit, while an extended beta-hairpin is found that lines the wall of the exit tunnel in the center of the 70S ribosome. The chain is Large ribosomal subunit protein uL22c (rpl22) from Populus alba (White poplar).